The primary structure comprises 659 residues: ATP-binding cassette sub-family D member 3 (659 aa).

An interaction with PEX19 region spans residues 1 to 61 (MAAFSKYLTA…GKKERAVVDK (61 aa)). The N-linked (GlcNAc...) asparagine glycan is linked to Asn12. Lys61 is subject to N6-acetyllysine. Residues 84–104 (GYLVLIAVMLVSRTYCDVWMI) form a helical membrane-spanning segment. The 288-residue stretch at 85 to 372 (YLVLIAVMLV…MLLRMSQALG (288 aa)) folds into the ABC transmembrane type-1 domain. Residue Asn106 is glycosylated (N-linked (GlcNAc...) asparagine). A helical transmembrane segment spans residues 126-146 (LLNFIAAMPLISLVNNFLKYG). N-linked (GlcNAc...) asparagine glycosylation occurs at Asn206. A helical transmembrane segment spans residues 224–244 (AIGAQGPASMMAYLVVSGLFL). Lys260 carries the post-translational modification N6-acetyllysine. Residues 313–333 (MGFIDSIIAKYLATVVGYLVV) form a helical membrane-spanning segment. Lys399 carries the N6-acetyllysine modification. An ABC transporter domain is found at 440–659 (IKFDHVPLAT…ITEDTVEFGS (220 aa)). 473-480 (GPNGCGKS) lines the ATP pocket. Lys533 carries the post-translational modification N6-acetyllysine. Ser659 is modified (phosphoserine).

It belongs to the ABC transporter superfamily. ABCD family. Peroxisomal fatty acyl CoA transporter (TC 3.A.1.203) subfamily. As to quaternary structure, homodimers. Can form heterodimers with ABCD1 and ABCD2. Dimerization is necessary to form an active transporter. Interacts with PEX19; mediates the targeting of ABCD3 to peroxisomes. Ubiquitinated by PEX2 during pexophagy in response to starvation, leading to its degradation.

The protein localises to the peroxisome membrane. The catalysed reaction is a very long-chain fatty acyl-CoA + H2O = a very long-chain fatty acid + CoA + H(+). The enzyme catalyses a very long-chain fatty acid(in) + ATP + H2O = a very long-chain fatty acid(out) + ADP + phosphate + H(+). It carries out the reaction a long-chain fatty acyl-CoA + H2O = a long-chain fatty acid + CoA + H(+). It catalyses the reaction a long-chain fatty acid(in) + ATP + H2O = a long-chain fatty acid(out) + ADP + phosphate + H(+). The catalysed reaction is pristanoyl-CoA + H2O = 2,6,10,14-tetramethylpentadecanoate + CoA + H(+). The enzyme catalyses 2,6,10,14-tetramethylpentadecanoate(in) + ATP + H2O = 2,6,10,14-tetramethylpentadecanoate(out) + ADP + phosphate + H(+). It carries out the reaction hexadecanedioyl-CoA + H2O = hexadecanedioate + CoA + H(+). It catalyses the reaction hexadecanedioate(in) + ATP + H2O = hexadecanedioate(out) + ADP + phosphate + H(+). The catalysed reaction is (5Z,8Z,11Z,14Z,17Z)-eicosapentaenoyl-CoA + H2O = (5Z,8Z,11Z,14Z,17Z)-eicosapentaenoate + CoA + H(+). The enzyme catalyses (5Z,8Z,11Z,14Z,17Z)-eicosapentaenoate(in) + ATP + H2O = (5Z,8Z,11Z,14Z,17Z)-eicosapentaenoate(out) + ADP + phosphate + H(+). It carries out the reaction (4Z,7Z,10Z,13Z,16Z,19Z)-docosahexaenoyl-CoA + H2O = (4Z,7Z,10Z,13Z,16Z,19Z)-docosahexaenoate + CoA + H(+). It catalyses the reaction (4Z,7Z,10Z,13Z,16Z,19Z)-docosahexaenoate(in) + ATP + H2O = (4Z,7Z,10Z,13Z,16Z,19Z)-docosahexaenoate(out) + ADP + phosphate + H(+). Its function is as follows. Broad substrate specificity ATP-dependent transporter of the ATP-binding cassette (ABC) family that catalyzes the transport of long-chain fatty acids (LCFA)-CoA, dicarboxylic acids-CoA, long-branched-chain fatty acids-CoA and bile acids from the cytosol to the peroxisome lumen for beta-oxydation. Has fatty acyl-CoA thioesterase and ATPase activities. Probably hydrolyzes fatty acyl-CoAs into free fatty acids prior to their ATP-dependent transport into peroxisomes. Thus, play a role in regulation of LCFAs and energy metabolism namely, in the degradation and biosynthesis of fatty acids by beta-oxidation. This chain is ATP-binding cassette sub-family D member 3, found in Homo sapiens (Human).